Reading from the N-terminus, the 445-residue chain is Probable D-serine dehydratase (445 aa).

K111 bears the N6-(pyridoxal phosphate)lysine mark.

This sequence belongs to the serine/threonine dehydratase family. DsdA subfamily. It depends on pyridoxal 5'-phosphate as a cofactor.

It catalyses the reaction D-serine = pyruvate + NH4(+). The sequence is that of Probable D-serine dehydratase from Burkholderia pseudomallei (strain 1710b).